The sequence spans 515 residues: Cytoplasmic dynein 1 light intermediate chain 1 (515 aa).

Positions 1–24 are enriched in low complexity; that stretch reads MAAVGRAGSFGSSSASGAANNASA. The tract at residues 1–34 is disordered; sequence MAAVGRAGSFGSSSASGAANNASAELRAGGEEDD. 64–71 lines the ATP pocket; sequence GEDGAGKT. Disordered stretches follow at residues 370-424 and 445-515; these read QSQL…DPNM and KTGS…GEAS. Polar residues predominate over residues 397-409; that stretch reads RTPNRSVTSNVAS. The segment covering 448 to 468 has biased composition (gly residues); that stretch reads SPGGPGGVGGSPGGGSAGGTG. The span at 490–499 shows a compositional bias: basic and acidic residues; sequence ELDRISRKPE. The segment covering 502-515 has biased composition (polar residues); sequence SPTSPTSPTEGEAS.

Belongs to the dynein light intermediate chain family. In terms of assembly, homodimer. The cytoplasmic dynein 1 complex consists of two catalytic heavy chains (HCs) and a number of non-catalytic subunits presented by intermediate chains (ICs). In terms of processing, phosphorylated.

The protein localises to the cytoplasm. The protein resides in the cytoskeleton. Its subcellular location is the chromosome. It localises to the centromere. It is found in the kinetochore. The protein localises to the spindle pole. The protein resides in the recycling endosome membrane. In terms of biological role, acts as one of several non-catalytic accessory components of the cytoplasmic dynein 1 complex that are thought to be involved in linking dynein to cargos and to adapter proteins that regulate dynein function. Cytoplasmic dynein 1 acts as a motor for the intracellular retrograde motility of vesicles and organelles along microtubules. May play a role in binding dynein to membranous organelles or chromosomes. May regulate the movement of peripheral sorting endosomes along microtubule tracks toward the microtubule organizing center/centrosome, generating the endosomal recycling compartment. The sequence is that of Cytoplasmic dynein 1 light intermediate chain 1 (DYNC1LI1) from Gallus gallus (Chicken).